The chain runs to 441 residues: Enolase (441 aa).

A (2R)-2-phosphoglycerate-binding site is contributed by Q164. Catalysis depends on E206, which acts as the Proton donor. Residues D243, E289, and D316 each coordinate Mg(2+). Positions 341, 370, 371, and 392 each coordinate (2R)-2-phosphoglycerate. Residue K341 is the Proton acceptor of the active site.

This sequence belongs to the enolase family. It depends on Mg(2+) as a cofactor.

It localises to the cytoplasm. It is found in the secreted. The protein localises to the cell surface. It carries out the reaction (2R)-2-phosphoglycerate = phosphoenolpyruvate + H2O. Its pathway is carbohydrate degradation; glycolysis; pyruvate from D-glyceraldehyde 3-phosphate: step 4/5. Its function is as follows. Catalyzes the reversible conversion of 2-phosphoglycerate (2-PG) into phosphoenolpyruvate (PEP). It is essential for the degradation of carbohydrates via glycolysis. The chain is Enolase from Leuconostoc citreum (strain KM20).